The sequence spans 496 residues: Cobyric acid synthase (496 aa).

The GATase cobBQ-type domain maps to 257–447 (KINVAIILLK…MHGILDNPAV (191 aa)). Cys338 serves as the catalytic Nucleophile. Residue His439 is part of the active site.

Belongs to the CobB/CobQ family. CobQ subfamily.

The protein operates within cofactor biosynthesis; adenosylcobalamin biosynthesis. Its function is as follows. Catalyzes amidations at positions B, D, E, and G on adenosylcobyrinic A,C-diamide. NH(2) groups are provided by glutamine, and one molecule of ATP is hydrogenolyzed for each amidation. In Parabacteroides distasonis (strain ATCC 8503 / DSM 20701 / CIP 104284 / JCM 5825 / NCTC 11152), this protein is Cobyric acid synthase.